The chain runs to 233 residues: MDIKLKDFEGPLDLLLHLVSQYKVDIYEVPIVEVIEQYLNYIETLQVMKLEVAGDYMLMASQLMLIKSRRLLPKVVEHIEEDLEQDLLEKIEEYSRFKAVSQALAKQHDQRAKWYSKPKQELIFEDAILQEDKTVMDLFLAFSNIMAAKRAVLKNNHTVIERDDYKIEDMMASIKQRLEKENVIRLSAIFEECQTLNEVISIFLASLELIKLHVVFVEQLSNFGAIILRKEKK.

It belongs to the ScpA family. Component of a cohesin-like complex composed of ScpA, ScpB and the Smc homodimer, in which ScpA and ScpB bind to the head domain of Smc. The presence of the three proteins is required for the association of the complex with DNA.

Its subcellular location is the cytoplasm. Its function is as follows. Participates in chromosomal partition during cell division. May act via the formation of a condensin-like complex containing Smc and ScpB that pull DNA away from mid-cell into both cell halves. The protein is Segregation and condensation protein A of Streptococcus pyogenes serotype M1.